Consider the following 784-residue polypeptide: MSALQASLLLRPLPSPLPPRRRLPLPSSSASFPRAGHHRRLPLPLRALASEGPQPAPSPAPDPPPPELPAAPEAEEVVGTAAAEGGGKVEEEELEDLVEKGRAWVLALAAAVVAAARRFFDWVVSGDWMSWWPFWRPDRRLQRLIDDADANPADPAKQSALLHELNKFSPEDVIKRFEQRSHAVDSRGVAEYLRALILTNGIADYLPDEQSGRSASLPALLQELKQRVSGNEDKPFMNPGISEKQPLHVVMVDPKATGRSTRFAQEIFSTVLFTIAVGLMWVMGAAALQKYIGSLGGIGASGVGSSSSYSPKELNKDIMPEKNVKTFKDVKGCDDAKKELEEVVEYLKNPSKFTRLGGKLPKGILLTGSPGTGKTLLAKAIAGEAGVPFFYRAGSEFEEMFVGVGARRVRSLFQAAKKKAPCIVFIDEIDAVGSTRKQWEGHTKKTLHQLLVEMDGFEQNEGIIVMAATNLPDILDPALTRPGRFDRHIVVPNPDVRGRQEILELYLQDKPVSSDVDVNAIARSTPGFNGADLANLVNIAAIKAAVEGADKLAAAQLEFAKDRIIMGTERKSMFISDESKKACLFKLLYFILRELILTAYHESGHAIVALNTQGAHPIHKATILPRGSALGMVTQLPSQDETSISKKQLLARLDVCMGGRVAEELIFGEDNVTTGARNDLHTATELAQYMVSNCGMSDAIGPVHVKERPSVEMQSRIDAEVVKLLREAYGRVKRLLKKHEKQLHALANALLERETLTADEINKVVHPYQEEPQLSFQEEDFALT.

Low complexity-rich tracts occupy residues 1–12, 24–34, and 42–53; these read MSALQASLLLRP, PLPSSSASFPR, and PLPLRALASEGP. A chloroplast and mitochondrion-targeting transit peptide spans 1 to 47; that stretch reads MSALQASLLLRPLPSPLPPRRRLPLPSSSASFPRAGHHRRLPLPLRA. Residues 1 to 71 are disordered; it reads MSALQASLLL…DPPPPELPAA (71 aa). Residues 54–69 show a composition bias toward pro residues; it reads QPAPSPAPDPPPPELP. 2 consecutive transmembrane segments (helical) span residues 104 to 124 and 267 to 287; these read WVLALAAAVVAAARRFFDWVV and IFSTVLFTIAVGLMWVMGAAA. 368–375 provides a ligand contact to ATP; that stretch reads GSPGTGKT. Residue histidine 601 participates in Zn(2+) binding. Glutamate 602 is a catalytic residue. Positions 605 and 679 each coordinate Zn(2+).

The protein in the N-terminal section; belongs to the AAA ATPase family. In the C-terminal section; belongs to the peptidase M41 family. Zn(2+) serves as cofactor.

The protein localises to the mitochondrion membrane. The protein resides in the plastid. Its subcellular location is the chloroplast thylakoid membrane. In terms of biological role, probable ATP-dependent zinc metallopeptidase. In Oryza sativa subsp. japonica (Rice), this protein is ATP-dependent zinc metalloprotease FTSH 9, chloroplastic/mitochondrial (FTSH9).